The following is a 353-amino-acid chain: C-X-C chemokine receptor type 4 (353 aa).

The interval 1–22 (MDGFRIFTSDNYTEDDLGSGDY) is important for chemokine binding and signaling. Residues 1 to 39 (MDGFRIFTSDNYTEDDLGSGDYDSIKEPCFREENAHFNR) are Extracellular-facing. N11 carries an N-linked (GlcNAc...) asparagine glycan. A Sulfotyrosine modification is found at Y12. An O-linked (Xyl...) (chondroitin sulfate) serine glycan is attached at S19. Y22 bears the Sulfotyrosine mark. 2 cysteine pairs are disulfide-bonded: C29/C275 and C110/C187. The helical transmembrane segment at 40 to 64 (IFLPTVYSIIFLTGIVGNGLVILVM) threads the bilayer. At 65–78 (GYQKKLRSMTDKYR) the chain is on the cytoplasmic side. The chain crosses the membrane as a helical span at residues 79 to 100 (LHLSVADLLFVLTLPFWAVDAV). The interval 95–98 (WAVD) is chemokine binding. Residues 101–111 (ANWYFGKFLCK) are Extracellular-facing. The chain crosses the membrane as a helical span at residues 112-131 (AVHVIYTVNLYSSVLILAFI). Residues 114–118 (HVIYT) form a chemokine binding region. Residues 132-155 (SLDRYLAIVHATNSQRPRKLLAEK) are Cytoplasmic-facing. An Important for signaling motif is present at residues 134 to 136 (DRY). An involved in dimerization; when bound to chemokine region spans residues 136–148 (YLAIVHATNSQRP). A helical membrane pass occupies residues 156 to 175 (VVYVGVWIPALLLTIPDFIF). Topologically, residues 176–196 (ANVREGDGRYICDRFYPNDLW) are extracellular. The chemokine binding, important for signaling stretch occupies residues 187–191 (CDRFY). The interval 192 to 211 (PNDLWLVVFQFQHIMVGLIL) is involved in dimerization. A helical membrane pass occupies residues 197–217 (LVVFQFQHIMVGLILPGIVIL). Over 218 to 242 (SCYCIIISKLSHSKGYQKRKALKTT) the chain is Cytoplasmic. A helical transmembrane segment spans residues 243–262 (VILILAFFACWLPYYIGISI). The Extracellular portion of the chain corresponds to 263-283 (DSFILLEIIQQGCEFESTVHK). Positions 267–269 (LLE) are involved in dimerization. Residues 284–303 (WISITEALAFFHCCLNPILY) form a helical membrane-spanning segment. Topologically, residues 304–353 (AFLGAKFKTSAQHALTSVSRGSSLKILSKGKRGGHSSVSTESESSSFHSS) are cytoplasmic. A phosphoserine mark is found at S320 and S322. S325 and S326 each carry phosphoserine; by PKC and GRK6. The interval 330–353 (LSKGKRGGHSSVSTESESSSFHSS) is disordered. Phosphoserine; by GRK6 is present on S331. K332 participates in a covalent cross-link: Glycyl lysine isopeptide (Lys-Gly) (interchain with G-Cter in ubiquitin). A compositionally biased stretch (low complexity) spans 338-353 (HSSVSTESESSSFHSS). S340 bears the Phosphoserine; by GRK6 mark. Phosphoserine occurs at positions 349 and 352.

This sequence belongs to the G-protein coupled receptor 1 family. In terms of assembly, monomer. Can form homodimers. Interacts with CD164. Interacts with ARRB2; the interaction is dependent on the C-terminal phosphorylation of CXCR4 and allows activation of MAPK1 and MAPK3. Interacts with ARR3; the interaction is dependent on the C-terminal phosphorylation of CXCR4 and modulates calcium mobilization. Interacts with RNF113A; the interaction, enhanced by CXCL12, promotes CXCR4 ubiquitination and subsequent degradation. Interacts (via the cytoplasmic C-terminal) with ITCH (via the WW domains I and II); the interaction, enhanced by CXCL12, promotes CXCR4 ubiquitination and leads to its degradation. Interacts with extracellular ubiquitin. Interacts with DBN1; this interaction is enhanced by antigenic stimulation. Following LPS binding, may form a complex with GDF5, HSP90AA1 and HSPA8. In terms of processing, phosphorylated on agonist stimulation. Rapidly phosphorylated on serine and threonine residues in the C-terminal. Phosphorylation at Ser-325 and Ser-326 leads to recruitment of ITCH, ubiquitination and protein degradation. Post-translationally, ubiquitinated after ligand binding, leading to its degradation. Ubiquitinated by ITCH at the cell membrane on agonist stimulation. The ubiquitin-dependent mechanism, endosomal sorting complex required for transport (ESCRT), then targets CXCR4 for lysosomal degradation. This process is dependent also on prior Ser-/Thr-phosphorylation in the C-terminal of CXCR4. Also binding of ARRB1 to STAM negatively regulates CXCR4 sorting to lysosomes though modulating ubiquitination of SFR5S. Sulfation is required for efficient binding of CXCL12/SDF-1alpha and promotes its dimerization. In terms of processing, O- and N-glycosylated. N-glycosylation can mask coreceptor function. The O-glycosylation chondroitin sulfate attachment does not affect interaction with CXCL12/SDF-1alpha nor its coreceptor activity.

The protein resides in the cell membrane. Its subcellular location is the cell junction. It localises to the early endosome. The protein localises to the late endosome. It is found in the lysosome. Receptor for the C-X-C chemokine CXCL12/SDF-1 that transduces a signal by increasing intracellular calcium ion levels and enhancing MAPK1/MAPK3 activation. Involved in the AKT signaling cascade. Plays a role in regulation of cell migration, e.g. during wound healing. Acts as a receptor for extracellular ubiquitin; leading to enhanced intracellular calcium ions and reduced cellular cAMP levels. Binds bacterial lipopolysaccharide (LPS) et mediates LPS-induced inflammatory response, including TNF secretion by monocytes. Involved in hematopoiesis and in cardiac ventricular septum formation. Also plays an essential role in vascularization of the gastrointestinal tract, probably by regulating vascular branching and/or remodeling processes in endothelial cells. Involved in cerebellar development. In the CNS, could mediate hippocampal-neuron survival. The chain is C-X-C chemokine receptor type 4 (CXCR4) from Sus scrofa (Pig).